The primary structure comprises 430 residues: Bystin (430 aa).

2 stretches are compositionally biased toward basic residues: residues 1-12 (MGKDKKDRKHKG) and 26-35 (PSKRVKHRRE). Disordered regions lie at residues 1 to 45 (MGKD…ESFV) and 65 to 113 (MEEY…SETY). Residues 68–78 (YGFRKTGDRKT) are compositionally biased toward basic and acidic residues. Acidic residues predominate over residues 93–104 (RIDDDDEDDSDD).

It belongs to the bystin family.

The protein resides in the nucleus. It localises to the nucleolus. In terms of biological role, required for processing of 20S pre-rRNA precursor and biogenesis of 40S ribosomal subunits. The sequence is that of Bystin (bysl) from Nematostella vectensis (Starlet sea anemone).